Reading from the N-terminus, the 152-residue chain is Large ribosomal subunit protein uL22 (152 aa).

Belongs to the universal ribosomal protein uL22 family. In terms of assembly, part of the 50S ribosomal subunit.

Its function is as follows. This protein binds specifically to 23S rRNA. It makes multiple contacts with different domains of the 23S rRNA in the assembled 50S subunit and ribosome. Functionally, the globular domain of the protein is located near the polypeptide exit tunnel on the outside of the subunit, while an extended beta-hairpin is found that lines the wall of the exit tunnel in the center of the 70S ribosome. The chain is Large ribosomal subunit protein uL22 from Cenarchaeum symbiosum (strain A).